Consider the following 1088-residue polypeptide: Myocardin-related transcription factor B (1088 aa).

Glu22 is modified (phosphoserine). The stretch at Glu40 to Lys65 is one RPEL 1 repeat. A Phosphoserine modification is found at Ser66. 2 RPEL repeats span residues Asn84–Phe109 and Asp128–Ser153. 4 disordered regions span residues Glu165–Gln310, Lys349–Leu389, Ala472–Asp508, and Leu528–Glu553. The span at Ser197–Val213 shows a compositional bias: low complexity. The span at Thr214 to Pro226 shows a compositional bias: polar residues. A compositionally biased stretch (pro residues) spans Ala238 to Pro248. Residues Asn272–Pro287 are compositionally biased toward basic and acidic residues. Positions Asn355–Ala366 are enriched in low complexity. Phosphothreonine is present on residues Thr367 and Thr370. Residues Thr367–Pro378 are compositionally biased toward polar residues. The region spanning Leu389–Gln423 is the SAP domain. Polar residues predominate over residues Leu528–Asp540. Phosphoserine is present on residues Ser541 and Ser543. Residues Ser541 to Ser550 show a composition bias toward low complexity. The stretch at Thr545–Arg601 forms a coiled coil. The required for interaction with itself and with MRTFA stretch occupies residues Leu563–Leu591. 2 disordered regions span residues Lys595–Ser655 and Asn829–Ala886. Lys628 participates in a covalent cross-link: Glycyl lysine isopeptide (Lys-Gly) (interchain with G-Cter in SUMO1). Polar residues predominate over residues Asn829–Gly838. Residues Lys867 to Lys879 are compositionally biased toward basic and acidic residues. The residue at position 921 (Ser921) is a Phosphoserine.

Interacts with MRTFA and SRF. O-glycosylated.

The protein localises to the nucleus. Acts as a transcriptional coactivator of serum response factor (SRF). Required for skeletal myogenic differentiation. This is Myocardin-related transcription factor B from Homo sapiens (Human).